We begin with the raw amino-acid sequence, 283 residues long: 4-diphosphocytidyl-2-C-methyl-D-erythritol kinase (283 aa).

Residue lysine 10 is part of the active site. Residue 99–109 (PMGGGLGGGSS) coordinates ATP. Aspartate 141 is an active-site residue.

This sequence belongs to the GHMP kinase family. IspE subfamily. Homodimer.

It carries out the reaction 4-CDP-2-C-methyl-D-erythritol + ATP = 4-CDP-2-C-methyl-D-erythritol 2-phosphate + ADP + H(+). It participates in isoprenoid biosynthesis; isopentenyl diphosphate biosynthesis via DXP pathway; isopentenyl diphosphate from 1-deoxy-D-xylulose 5-phosphate: step 3/6. Functionally, catalyzes the phosphorylation of the position 2 hydroxy group of 4-diphosphocytidyl-2C-methyl-D-erythritol. The protein is 4-diphosphocytidyl-2-C-methyl-D-erythritol kinase of Salmonella gallinarum (strain 287/91 / NCTC 13346).